The chain runs to 348 residues: ECA polysaccharide chain length modulation protein (348 aa).

The next 2 helical transmembrane spans lie at 31–51 (FWIIGIGLLFALIALAYTFFA) and 323–343 (AFLMIMWGIVGALIGAGVALT).

The protein belongs to the WzzB/Cld/Rol family. In terms of assembly, probably part of a complex composed of WzxE, WzyE and WzzE.

It localises to the cell inner membrane. The protein operates within bacterial outer membrane biogenesis; enterobacterial common antigen biosynthesis. Functionally, modulates the polysaccharide chain length of enterobacterial common antigen (ECA). The protein is ECA polysaccharide chain length modulation protein of Salmonella typhimurium (strain LT2 / SGSC1412 / ATCC 700720).